The chain runs to 245 residues: Small ribosomal subunit protein uS3 (245 aa).

One can recognise a KH type-2 domain in the interval 39-111; the sequence is IRNFINKNYS…EVFFNVIEIK (73 aa).

It belongs to the universal ribosomal protein uS3 family. As to quaternary structure, part of the 30S ribosomal subunit. Forms a tight complex with proteins S10 and S14.

In terms of biological role, binds the lower part of the 30S subunit head. Binds mRNA in the 70S ribosome, positioning it for translation. The chain is Small ribosomal subunit protein uS3 from Phytoplasma mali (strain AT).